The following is a 72-amino-acid chain: Translation initiation factor IF-1 (72 aa).

Residues 1–72 (MSKEEVLEFS…TKGRIIYRYK (72 aa)) enclose the S1-like domain.

Belongs to the IF-1 family. As to quaternary structure, component of the 30S ribosomal translation pre-initiation complex which assembles on the 30S ribosome in the order IF-2 and IF-3, IF-1 and N-formylmethionyl-tRNA(fMet); mRNA recruitment can occur at any time during PIC assembly.

Its subcellular location is the cytoplasm. One of the essential components for the initiation of protein synthesis. Stabilizes the binding of IF-2 and IF-3 on the 30S subunit to which N-formylmethionyl-tRNA(fMet) subsequently binds. Helps modulate mRNA selection, yielding the 30S pre-initiation complex (PIC). Upon addition of the 50S ribosomal subunit IF-1, IF-2 and IF-3 are released leaving the mature 70S translation initiation complex. The sequence is that of Translation initiation factor IF-1 from Bartonella henselae (strain ATCC 49882 / DSM 28221 / CCUG 30454 / Houston 1) (Rochalimaea henselae).